The sequence spans 82 residues: Small ribosomal subunit protein bS16 (82 aa).

This sequence belongs to the bacterial ribosomal protein bS16 family.

In Klebsiella pneumoniae (strain 342), this protein is Small ribosomal subunit protein bS16.